The following is a 129-amino-acid chain: Lysozyme C, milk isozyme (129 aa).

One can recognise a C-type lysozyme domain in the interval 1–129 (KIFSKCELAR…LSKYLASCNL (129 aa)). 4 disulfides stabilise this stretch: cysteine 6–cysteine 127, cysteine 30–cysteine 115, cysteine 65–cysteine 80, and cysteine 76–cysteine 94. Catalysis depends on residues glutamate 35 and aspartate 53. The Ca(2+) site is built by lysine 82, aspartate 85, asparagine 87, aspartate 90, and aspartate 91.

This sequence belongs to the glycosyl hydrolase 22 family. Monomer. The cofactor is Ca(2+).

The enzyme catalyses Hydrolysis of (1-&gt;4)-beta-linkages between N-acetylmuramic acid and N-acetyl-D-glucosamine residues in a peptidoglycan and between N-acetyl-D-glucosamine residues in chitodextrins.. Functionally, lysozymes have primarily a bacteriolytic function; those in tissues and body fluids are associated with the monocyte-macrophage system and enhance the activity of immunoagents. This Canis lupus familiaris (Dog) protein is Lysozyme C, milk isozyme.